The primary structure comprises 538 residues: Sodium/hydrogen exchanger 1 (538 aa).

The Cytoplasmic segment spans residues 1 to 19 (MLDSLVSKLPSLSTSDHAS). A helical membrane pass occupies residues 20–40 (VVALNLFVALLCACIVLGHLL). Over 41-45 (EENRW) the chain is Vacuolar. A helical transmembrane segment spans residues 46-66 (MNESITALLIGLGTGVTILLI). Residues 67–73 (SKGKSSH) lie on the Cytoplasmic side of the membrane. An intramembrane region (helical) is located at residues 74 to 94 (LLVFSEDLFFIYLLPPIIFNA). Residues 95–106 (GFQVKKKQFFRN) are Cytoplasmic-facing. Residues 107-127 (FVTIMLFGAVGTIISCTIISL) form a helical membrane-spanning segment. The Vacuolar portion of the chain corresponds to 128–146 (GVTQFFKKLDIGTFDLGDY). 2 intramembrane regions (helical) span residues 147–166 (LAIG…QVLN) and 172–192 (LLYS…VVVF). Residues 193–216 (NAIQSFDLTHLNHEAAFHLLGNFL) are Vacuolar-facing. The chain crosses the membrane as a helical span at residues 217–237 (YLFLLSTLLGAATGLISAYVI). The Cytoplasmic portion of the chain corresponds to 238-262 (KKLYFGRHSTDREVALMMLMAYLSY). Residues 263–283 (MLAELFDLSGILTVFFCGIVM) form a helical membrane-spanning segment. Over 284–302 (SHYTWHNVTESSRITTKHT) the chain is Vacuolar. N-linked (GlcNAc...) asparagine glycosylation is present at asparagine 290. Residues 303–323 (FATLSFLAETFIFLYVGMDAL) traverse the membrane as a helical segment. At 324–342 (DIDKWRSVSDTPGTSIAVS) the chain is on the cytoplasmic side. A helical membrane pass occupies residues 343 to 363 (SILMGLVMVGRAAFVFPLSFL). Residues 364 to 378 (SNLAKKNQSEKINFN) are Vacuolar-facing. Residue asparagine 370 is glycosylated (N-linked (GlcNAc...) asparagine). A helical transmembrane segment spans residues 379-399 (MQVVIWWSGLMRGAVSMALAY). Residues 400-413 (NKFTRAGHTDVRGN) lie on the Cytoplasmic side of the membrane. Residues 414–434 (AIMITSTITVCLFSTVVFGML) traverse the membrane as a helical segment. Residues 435-538 (TKPLISYLLP…ERNPPDLSKA (104 aa)) are Vacuolar-facing. The N-linked (GlcNAc...) asparagine glycan is linked to asparagine 447. Positions 496 to 518 (RTVHYYWRQFDDSFMRPVFGGRG) are interaction with CML18/CAM15.

The protein belongs to the monovalent cation:proton antiporter 1 (CPA1) transporter (TC 2.A.36) family. In terms of assembly, calcium and pH-dependent interaction with CML18/CAM15 (increases when pH decreases, better at pH 5.5 than at pH 7.5). In terms of tissue distribution, ubiquitous, with higher levels around vascular tissues and guard cells.

It is found in the vacuole membrane. It localises to the endoplasmic reticulum membrane. Its subcellular location is the golgi apparatus membrane. The catalysed reaction is Na(+)(in) + H(+)(out) = Na(+)(out) + H(+)(in). It catalyses the reaction K(+)(in) + H(+)(out) = K(+)(out) + H(+)(in). Functionally, acts in low affinity electroneutral exchange of protons for cations such as Na(+) or K(+) across membranes. Can also exchange Li(+) and Cs(+) with a lower affinity. Involved in vacuolar ion compartmentalization necessary for cell volume regulation and cytoplasmic Na(+) detoxification. Required during leaves expansion, probably to stimulate epidermal cell expansion. Confers competence to grow in high salinity conditions. The polypeptide is Sodium/hydrogen exchanger 1 (NHX1) (Arabidopsis thaliana (Mouse-ear cress)).